The primary structure comprises 447 residues: NADP-specific glutamate dehydrogenase (447 aa).

Substrate is bound by residues Lys-92, Gln-113, and Lys-116. The Proton donor role is filled by Lys-128. Residue Gly-167 participates in substrate binding. NADP(+) contacts are provided by Thr-212 and Asn-243. Ser-379 is a substrate binding site.

It belongs to the Glu/Leu/Phe/Val dehydrogenases family. In terms of assembly, homohexamer.

It catalyses the reaction L-glutamate + NADP(+) + H2O = 2-oxoglutarate + NH4(+) + NADPH + H(+). Its function is as follows. Catalyzes the reversible oxidative deamination of glutamate to alpha-ketoglutarate and ammonia. The protein is NADP-specific glutamate dehydrogenase (gdh) of Corynebacterium efficiens (strain DSM 44549 / YS-314 / AJ 12310 / JCM 11189 / NBRC 100395).